The sequence spans 49 residues: Large ribosomal subunit protein bL33B (49 aa).

Belongs to the bacterial ribosomal protein bL33 family.

The protein is Large ribosomal subunit protein bL33B of Bacillus cereus (strain ATCC 14579 / DSM 31 / CCUG 7414 / JCM 2152 / NBRC 15305 / NCIMB 9373 / NCTC 2599 / NRRL B-3711).